The primary structure comprises 333 residues: Biotin synthase (333 aa).

One can recognise a Radical SAM core domain in the interval 54–287 (ANHGAIHACS…TKIIKFAAGR (234 aa)). [4Fe-4S] cluster is bound by residues C72, C76, and C79. [2Fe-2S] cluster is bound by residues C151, C212, and K282.

This sequence belongs to the radical SAM superfamily. Biotin synthase family. As to quaternary structure, homodimer. The cofactor is [4Fe-4S] cluster. Requires [2Fe-2S] cluster as cofactor.

It catalyses the reaction (4R,5S)-dethiobiotin + (sulfur carrier)-SH + 2 reduced [2Fe-2S]-[ferredoxin] + 2 S-adenosyl-L-methionine = (sulfur carrier)-H + biotin + 2 5'-deoxyadenosine + 2 L-methionine + 2 oxidized [2Fe-2S]-[ferredoxin]. The protein operates within cofactor biosynthesis; biotin biosynthesis; biotin from 7,8-diaminononanoate: step 2/2. In terms of biological role, catalyzes the conversion of dethiobiotin (DTB) to biotin by the insertion of a sulfur atom into dethiobiotin via a radical-based mechanism. In Chlorobaculum tepidum (strain ATCC 49652 / DSM 12025 / NBRC 103806 / TLS) (Chlorobium tepidum), this protein is Biotin synthase.